Reading from the N-terminus, the 444-residue chain is Enolase 1 (444 aa).

Residues His-165 and Glu-174 each coordinate substrate. Glu-217 (proton donor) is an active-site residue. Positions 303 and 330 each coordinate substrate. Lys-355 acts as the Proton acceptor in catalysis. Substrate is bound by residues 382 to 385 (SHRS) and Lys-406.

Belongs to the enolase family. In terms of assembly, homodimer. Mg(2+) is required as a cofactor.

The protein localises to the cytoplasm. It carries out the reaction (2R)-2-phosphoglycerate = phosphoenolpyruvate + H2O. It functions in the pathway carbohydrate degradation; glycolysis; pyruvate from D-glyceraldehyde 3-phosphate: step 4/5. In Toxoplasma gondii, this protein is Enolase 1 (ENO1).